The primary structure comprises 873 residues: Inner centromere protein A (873 aa).

Disordered stretches follow at residues 50–124, 237–270, 282–452, 484–535, 566–649, 683–736, and 781–800; these read AEPE…KRMT, PANE…VVRK, FSLA…PPPH, KRNT…KVRR, QIDE…LAEQ, LERA…EQAA, and DLNS…PIPA. Positions 60–69 are enriched in basic residues; sequence SQKRRRKKRT. Over residues 87–105 the composition is skewed to low complexity; that stretch reads RQSNASWSSSVRRLSVRNQ. A compositionally biased stretch (polar residues) spans 239–254; the sequence is NEQQLNLSNQSATPTG. Over residues 261 to 270 the composition is skewed to basic residues; sequence SVRRSLVVRK. Residues 286–297 show a composition bias toward basic and acidic residues; sequence SKRESMTREAVR. Low complexity predominate over residues 314–325; it reads SSTSSQRSYQSS. The segment covering 437 to 452 has biased composition (pro residues); it reads PSPPCPPSKIVRPPPH. 4 stretches are compositionally biased toward basic and acidic residues: residues 491 to 535, 566 to 584, 591 to 649, and 683 to 733; these read TDPK…KVRR, QIDE…EEKA, KKQE…LAEQ, and LERA…KAKE. The tract at residues 494-707 is SAH; it reads KTEEKERQRL…EERKKREQQE (214 aa). The segment at 782 to 856 is IN box; that stretch reads LNSDDSTDDE…RTSSAVWHSP (75 aa). A phosphoserine mark is found at Ser-849 and Ser-850.

It belongs to the INCENP family. As to quaternary structure, component of the CPC composed of survivin/birc5, incenp, cdca8/borealin and/or cdca9/dasra-A, and aurkb/aurora-B. Interacts (via C-terminus) with aurkb (via N-terminus and kinase domain). Interacts (via N-terminus) with birc5.1, birc5.2, cdca8 and cdca9. Interacts with mtus1.

Its subcellular location is the nucleus. It is found in the chromosome. The protein resides in the centromere. It localises to the cytoplasm. The protein localises to the cytoskeleton. Its subcellular location is the spindle. It is found in the midbody. The protein resides in the kinetochore. Component of the chromosomal passenger complex (CPC), a complex that acts as a key regulator of mitosis. The CPC complex has essential functions at the centromere in ensuring correct chromosome alignment and segregation and is required for chromatin-induced microtubule stabilization and spindle assembly. Acts as a scaffold regulating CPC localization and activity. The C-terminus associates with aurkb/aurora-B, the N-terminus associated with cdca8/borealin and/or cdca9/dasra-A tethers the CPC to the inner centromere, and the microtubule binding activity within the central SAH domain directs aurkb/aurora-B toward substrates near microtubules. Activates aurkb. This is Inner centromere protein A (incenp-a) from Xenopus laevis (African clawed frog).